A 492-amino-acid chain; its full sequence is Nuclear autoantigenic sperm protein homolog (492 aa).

Residues 1–14 (MSAEAEAIVTTATA) are compositionally biased toward low complexity. Disordered stretches follow at residues 1–52 (MSAE…EQER) and 123–254 (DVPD…EEGV). T32 and T33 each carry phosphothreonine. The span at 124–145 (VPDEAADDDDEDVDDDEEESAE) shows a compositional bias: acidic residues. 2 stretches are compositionally biased toward basic and acidic residues: residues 147–159 (GAAK…DTKE) and 170–179 (KELDTIKEGS). 2 positions are modified to phosphoserine: S179 and S184. T185 carries the phosphothreonine modification. The residue at position 193 (S193) is a Phosphoserine. Polar residues predominate over residues 226-238 (STSNGEVTASCSN). Acidic residues predominate over residues 244-253 (VEEEPEEEEG). TPR repeat units follow at residues 284 to 317 (AEVQ…HGEL) and 326 to 359 (AELH…IEEE). Positions 377–400 (MLDLEETKQEILAKIQEIEEMQAQ) form a coiled coil. The segment covering 418–459 (SGDAAAASSSSSSSANGAASSSSSSSKGAAAASSSTISSSSA) has biased composition (low complexity). Positions 418-492 (SGDAAAASSS…LCSPAKRAAV (75 aa)) are disordered. Residues S478 and S485 each carry the phosphoserine modification.

This sequence belongs to the NASP family. Interacts with the histone H3-H4 heterodimer; the interaction with H4 is probably indirect and mediated by H3 (His3, His3.3A and His3.3B). Interacts with His2Av; this interaction directly or indirectly destabilizes His2Av.

The protein resides in the cytoplasm. The protein localises to the nucleus. It localises to the perinuclear region. In terms of biological role, component of the histone chaperone network. Binds and stabilizes histone H3-H4 not bound to chromatin to maintain a soluble reservoir and modulate degradation by chaperone-mediated autophagy. May also bind and stabilize monomeric H3. Maternal effect gene essential for early embryogenesis. The sequence is that of Nuclear autoantigenic sperm protein homolog from Drosophila melanogaster (Fruit fly).